A 385-amino-acid chain; its full sequence is tRNA(Met) cytidine acetate ligase (385 aa).

Residues 7–20 (VAEYNPFHSGHEFL), glycine 101, asparagine 153, and arginine 178 contribute to the ATP site.

The protein belongs to the TmcAL family.

Its subcellular location is the cytoplasm. The catalysed reaction is cytidine(34) in elongator tRNA(Met) + acetate + ATP = N(4)-acetylcytidine(34) in elongator tRNA(Met) + AMP + diphosphate. Its function is as follows. Catalyzes the formation of N(4)-acetylcytidine (ac(4)C) at the wobble position of elongator tRNA(Met), using acetate and ATP as substrates. First activates an acetate ion to form acetyladenylate (Ac-AMP) and then transfers the acetyl group to tRNA to form ac(4)C34. This Lactobacillus gasseri (strain ATCC 33323 / DSM 20243 / BCRC 14619 / CIP 102991 / JCM 1131 / KCTC 3163 / NCIMB 11718 / NCTC 13722 / AM63) protein is tRNA(Met) cytidine acetate ligase.